Here is a 494-residue protein sequence, read N- to C-terminus: Sugar phosphate exchanger 3 (494 aa).

Residues glycine 10–serine 30 traverse the membrane as a helical segment. Asparagine 58 carries N-linked (GlcNAc...) asparagine glycosylation. 5 helical membrane-spanning segments follow: residues threonine 81–isoleucine 101, tryptophan 113–threonine 133, glycine 146–methionine 166, valine 177–alanine 197, and phenylalanine 209–valine 229. The interval glycine 240–aspartate 261 is disordered. The next 6 helical transmembrane spans lie at leucine 297–leucine 317, isoleucine 333–leucine 353, alanine 357–serine 377, leucine 386–isoleucine 406, glycine 428–isoleucine 448, and valine 457–valine 477.

This sequence belongs to the major facilitator superfamily. Organophosphate:Pi antiporter (OPA) (TC 2.A.1.4) family. Interacts with ATRAID; the interaction is direct and both proteins are mutually dependent for their stability. Post-translationally, glycosylated.

It localises to the endoplasmic reticulum membrane. The protein resides in the lysosome membrane. Unlike the other SLC37 members, lacks glucose-6-phosphate antiporter activity. In osteoclasts, forms a transporter complex with ATRAID for nitrogen-containing-bisphophonates (N-BPs) required for releasing N-BP molecules that have trafficked to lysosomes through fluid-phase endocytosis into the cytosol. The sequence is that of Sugar phosphate exchanger 3 (Slc37a3) from Mus musculus (Mouse).